Here is a 348-residue protein sequence, read N- to C-terminus: NADH-ubiquinone oxidoreductase chain 2 (348 aa).

Helical transmembrane passes span 3 to 23 (PTVL…TFIG), 25 to 45 (HWLL…PLMI), 59 to 79 (YFIT…TNAW), 95 to 115 (ATLA…HFWL), 149 to 171 (LNSN…GGLN), 178 to 198 (ILAY…HYSP), 199 to 219 (SLTL…FLLF), 242 to 262 (VIAL…GFMP), 274 to 294 (SLII…FFYL), and 324 to 344 (LILL…PLIL).

Belongs to the complex I subunit 2 family.

It is found in the mitochondrion inner membrane. The enzyme catalyses a ubiquinone + NADH + 5 H(+)(in) = a ubiquinol + NAD(+) + 4 H(+)(out). Core subunit of the mitochondrial membrane respiratory chain NADH dehydrogenase (Complex I) that is believed to belong to the minimal assembly required for catalysis. Complex I functions in the transfer of electrons from NADH to the respiratory chain. The immediate electron acceptor for the enzyme is believed to be ubiquinone. In Scyliorhinus canicula (Small-spotted catshark), this protein is NADH-ubiquinone oxidoreductase chain 2 (MT-ND2).